The chain runs to 449 residues: uncharacterized protein (449 aa).

Residues 3–61 (VWQQGATIELRIDSLSHTGEGVGRWQDRVVFVADTVPGDRLRVRLTHVKRQYAHGKVLE) enclose the TRAM domain. Residues C74, C80, C83, and C161 each coordinate [4Fe-4S] cluster. Q283, Y312, E333, and D378 together coordinate S-adenosyl-L-methionine. C405 functions as the Nucleophile in the catalytic mechanism.

Belongs to the class I-like SAM-binding methyltransferase superfamily. RNA M5U methyltransferase family.

This is an uncharacterized protein from Thermosynechococcus vestitus (strain NIES-2133 / IAM M-273 / BP-1).